Consider the following 75-residue polypeptide: Porwaprin-d (75 aa).

The first 24 residues, 1 to 24 (MSSGGLLLLLGLLTLWAELTPVSS), serve as a signal peptide directing secretion. The WAP domain maps to 27-72 (RPKKPGLCPPRPQKPPCVRECKNDWRCPGEQKCCRYGCIYECRDPI). Intrachain disulfides connect C34–C60, C43–C64, C47–C59, and C53–C68.

This sequence belongs to the venom waprin family. As to expression, expressed by the venom gland.

The protein resides in the secreted. In terms of biological role, damages membranes of susceptible bacteria. Has no hemolytic activity. Not toxic to mice. Does not inhibit the proteinases elastase and cathepsin G. The sequence is that of Porwaprin-d from Pseudechis porphyriacus (Red-bellied black snake).